A 449-amino-acid chain; its full sequence is Tripartite motif-containing protein 64 (449 aa).

An RING-type zinc finger spans residues 15–56 (CCICVNYFIDPVTIDCGHSFCRPCLCLCSEEGRAPMRCPSCR). A B box-type zinc finger spans residues 87-128 (SSDNICVLHEETKELFCEADKRLLCGPCSESPEHMAHSHSPI). Zn(2+) contacts are provided by Cys-92, His-95, Cys-114, and His-120. Residues 189 to 225 (LDEEEQRHLQALEREAEELFQQLQDSQVRMTQHLERM) are a coiled coil. Residues 269–449 (LTSWCITGVL…LRPFFCFGCT (181 aa)) form the B30.2/SPRY domain.

This sequence belongs to the TRIM/RBCC family.

The sequence is that of Tripartite motif-containing protein 64 (TRIM64) from Homo sapiens (Human).